The chain runs to 430 residues: Adenylosuccinate synthetase (430 aa).

GTP is bound by residues 12–18 (GDEGKGK) and 40–42 (GHT). Asp-13 acts as the Proton acceptor in catalysis. Asp-13 and Gly-40 together coordinate Mg(2+). IMP-binding positions include 13-16 (DEGK), 38-41 (NAGH), Thr-129, Arg-143, Gln-223, Thr-238, and Arg-302. His-41 acts as the Proton donor in catalysis. 298-304 (TTTGRPR) is a substrate binding site. GTP is bound by residues Arg-304, 330-332 (KLD), and 412-414 (SVG).

This sequence belongs to the adenylosuccinate synthetase family. In terms of assembly, homodimer. The cofactor is Mg(2+).

Its subcellular location is the cytoplasm. The enzyme catalyses IMP + L-aspartate + GTP = N(6)-(1,2-dicarboxyethyl)-AMP + GDP + phosphate + 2 H(+). It participates in purine metabolism; AMP biosynthesis via de novo pathway; AMP from IMP: step 1/2. Its function is as follows. Plays an important role in the de novo pathway of purine nucleotide biosynthesis. Catalyzes the first committed step in the biosynthesis of AMP from IMP. The sequence is that of Adenylosuccinate synthetase from Desulforudis audaxviator (strain MP104C).